We begin with the raw amino-acid sequence, 162 residues long: Cytochrome c-type biogenesis protein CcmE (162 aa).

The Cytoplasmic segment spans residues 1–8 (MNPVRKKR). The helical; Signal-anchor for type II membrane protein transmembrane segment at 9–29 (LIIVLAIVVGVGAAVGLALSA) threads the bilayer. Topologically, residues 30-162 (LQQNINLFYT…GETSYNQEGK (133 aa)) are periplasmic. Residues histidine 124 and tyrosine 128 each coordinate heme. Over residues 139–148 (DSGQLKHYEN) the composition is skewed to basic and acidic residues. Residues 139-162 (DSGQLKHYENGKAAGETSYNQEGK) are disordered.

The protein belongs to the CcmE/CycJ family.

It is found in the cell inner membrane. Its function is as follows. Heme chaperone required for the biogenesis of c-type cytochromes. Transiently binds heme delivered by CcmC and transfers the heme to apo-cytochromes in a process facilitated by CcmF and CcmH. This Pseudomonas aeruginosa (strain LESB58) protein is Cytochrome c-type biogenesis protein CcmE.